The primary structure comprises 732 residues: Elongation factor 2 (732 aa).

Positions 19-260 (ERIRNMGIAA…MVVKHLPNPL (242 aa)) constitute a tr-type G domain. GTP is bound by residues 28–35 (AHIDHGKT), 94–98 (DTPGH), and 148–151 (NKVD). A Diphthamide modification is found at His-597.

It belongs to the TRAFAC class translation factor GTPase superfamily. Classic translation factor GTPase family. EF-G/EF-2 subfamily.

The protein localises to the cytoplasm. Catalyzes the GTP-dependent ribosomal translocation step during translation elongation. During this step, the ribosome changes from the pre-translocational (PRE) to the post-translocational (POST) state as the newly formed A-site-bound peptidyl-tRNA and P-site-bound deacylated tRNA move to the P and E sites, respectively. Catalyzes the coordinated movement of the two tRNA molecules, the mRNA and conformational changes in the ribosome. This is Elongation factor 2 from Thermococcus kodakarensis (strain ATCC BAA-918 / JCM 12380 / KOD1) (Pyrococcus kodakaraensis (strain KOD1)).